The following is a 128-amino-acid chain: uncharacterized protein (128 aa).

A compositionally biased stretch (basic and acidic residues) spans 1 to 28 (MDADDFGKKDLENGNESPKKPIFMKDWK). A disordered region spans residues 1-30 (MDADDFGKKDLENGNESPKKPIFMKDWKNS).

Its subcellular location is the cytoplasm. The protein localises to the nucleus. This is an uncharacterized protein from Schizosaccharomyces pombe (strain 972 / ATCC 24843) (Fission yeast).